Reading from the N-terminus, the 224-residue chain is UPF0173 metal-dependent hydrolase EF_1371 (224 aa).

This sequence belongs to the UPF0173 family.

In Enterococcus faecalis (strain ATCC 700802 / V583), this protein is UPF0173 metal-dependent hydrolase EF_1371.